Reading from the N-terminus, the 126-residue chain is Large ribosomal subunit protein bL17 (126 aa).

It belongs to the bacterial ribosomal protein bL17 family. As to quaternary structure, part of the 50S ribosomal subunit. Contacts protein L32.

This is Large ribosomal subunit protein bL17 from Xylella fastidiosa (strain 9a5c).